The primary structure comprises 204 residues: Large ribosomal subunit protein eL15 (204 aa).

It belongs to the eukaryotic ribosomal protein eL15 family. In terms of assembly, component of the large ribosomal subunit.

The protein localises to the cytoplasm. In terms of biological role, component of the large ribosomal subunit. The ribosome is a large ribonucleoprotein complex responsible for the synthesis of proteins in the cell. The sequence is that of Large ribosomal subunit protein eL15 (rpl15) from Tachysurus fulvidraco (Yellow catfish).